Here is a 1005-residue protein sequence, read N- to C-terminus: Translation initiation factor IF-2 (1005 aa).

Disordered regions lie at residues 54–337 (KYVP…RRPQ) and 368–414 (PKPK…PTSV). Positions 58-73 (SPSTHSMPPTRPTSHS) are enriched in polar residues. Residues 75-86 (PLPPQPGKPQPK) show a composition bias toward pro residues. A compositionally biased stretch (polar residues) spans 146–157 (GSNSPSHSESTP). Low complexity-rich tracts occupy residues 189–198 (PSPAAMAGRA) and 222–240 (VESA…PRAE). Over residues 258–274 (PRSETSEDGARRGEKLV) the composition is skewed to basic and acidic residues. Residues 392-401 (GGRKLSRRDR) show a composition bias toward basic residues. The region spanning 495 to 668 (RRPPVVTIMG…LLVSEVEDLY (174 aa)) is the tr-type G domain. The tract at residues 504 to 511 (GHVDHGKT) is G1. 504-511 (GHVDHGKT) lines the GTP pocket. The segment at 529-533 (GITQH) is G2. The interval 554–557 (DTPG) is G3. GTP-binding positions include 554-558 (DTPGH) and 608-611 (NKID). Residues 608 to 611 (NKID) are G4. The tract at residues 644–646 (SAI) is G5.

Belongs to the TRAFAC class translation factor GTPase superfamily. Classic translation factor GTPase family. IF-2 subfamily.

The protein localises to the cytoplasm. One of the essential components for the initiation of protein synthesis. Protects formylmethionyl-tRNA from spontaneous hydrolysis and promotes its binding to the 30S ribosomal subunits. Also involved in the hydrolysis of GTP during the formation of the 70S ribosomal complex. This chain is Translation initiation factor IF-2, found in Cyanothece sp. (strain PCC 7425 / ATCC 29141).